A 301-amino-acid chain; its full sequence is Homoserine O-acetyltransferase (301 aa).

C142 (acyl-thioester intermediate) is an active-site residue. Substrate is bound by residues K163 and S192. The Proton acceptor role is filled by H235. E237 is a catalytic residue. R249 contacts substrate.

It belongs to the MetA family.

It is found in the cytoplasm. The enzyme catalyses L-homoserine + acetyl-CoA = O-acetyl-L-homoserine + CoA. The protein operates within amino-acid biosynthesis; L-methionine biosynthesis via de novo pathway; O-acetyl-L-homoserine from L-homoserine: step 1/1. Transfers an acetyl group from acetyl-CoA to L-homoserine, forming acetyl-L-homoserine. In Novosphingobium aromaticivorans (strain ATCC 700278 / DSM 12444 / CCUG 56034 / CIP 105152 / NBRC 16084 / F199), this protein is Homoserine O-acetyltransferase.